The following is a 235-amino-acid chain: RAD9, HUS1, RAD1-interacting nuclear orphan protein 1 (235 aa).

Phosphoserine is present on serine 50. Residues 54 to 60 (SWVLPQF) carry the RAD1-binding motif motif. A disordered region spans residues 66-106 (SRFPTHRKHHRDQARHPTRRSTCKFPRLTFESPESSSSETL). Over residues 69-87 (PTHRKHHRDQARHPTRRST) the composition is skewed to basic residues. Residues 96–106 (ESPESSSSETL) are compositionally biased toward low complexity. The short motif at 123 to 130 (RRPLVPLF) is the D-box element. Positions 156–198 (QTPGSSVREDPISPDQKENSLPSCILGPRTPRTPEPGPVLVKD) are disordered. Residues 162 to 173 (VREDPISPDQKE) are compositionally biased toward basic and acidic residues. Residues 171–175 (QKENS) carry the KEN box motif.

Interacts (when phosphorylated by PLK1) with POLQ; promoting POLQ recruitment to DNA damage sites. Interacts with RAD1; interaction is direct and promotes association with the 9-1-1 (RAD9-RAD1-HUS1) complex. Interacts with RAD18. Interacts with TOPBP1. Interacts with UBE2N. In terms of processing, phosphorylated at Ser-50 by PLK1, promoting interaction with polymerase theta (POLQ). Ubiquitinated and degraded by the APC/C complex upon mitotic exit.

It localises to the nucleus. The protein localises to the chromosome. Functionally, involved in microhomology-mediated end-joining (MMEJ) DNA repair by promoting recruitment of polymerase theta (POLQ) to DNA damage sites during mitosis. MMEJ is an alternative non-homologous end-joining (NHEJ) machinery that takes place during mitosis to repair double-strand breaks in DNA that originate in S-phase. Accumulates in M-phase; following phosphorylation by PLK1, interacts with POLQ, enabling its recruitment to double-strand breaks for subsequent repair. Also involved in the DNA damage response (DDR) signaling in response to genotoxic stresses such as ionizing radiation (IR) during the S phase. Recruited to sites of DNA damage through interaction with the 9-1-1 cell-cycle checkpoint response complex and TOPBP1 in a ATR-dependent manner. Required for the progression of the G1 to S phase transition. Plays a role in the stimulation of CHEK1 phosphorylation. The sequence is that of RAD9, HUS1, RAD1-interacting nuclear orphan protein 1 (Rhno1) from Rattus norvegicus (Rat).